The chain runs to 405 residues: Glyceraldehyde-3-phosphate dehydrogenase A, chloroplastic (405 aa).

The N-terminal 68 residues, 1–68 (MASATFSVAK…GHKKSLVVEA (68 aa)), are a transit peptide targeting the chloroplast. NADP(+) contacts are provided by residues 80-81 (RI), Asp-104, and Arg-149. Residues 221–223 (SCT), Thr-252, Arg-267, 280–281 (TG), and Arg-303 each bind D-glyceraldehyde 3-phosphate. Cys-222 functions as the Nucleophile in the catalytic mechanism. Residue Asn-385 participates in NADP(+) binding.

It belongs to the glyceraldehyde-3-phosphate dehydrogenase family. As to quaternary structure, tetramer of either four A chains (GAPDH 2) or two A and two B chains (GAPDH 1).

It localises to the plastid. Its subcellular location is the chloroplast. The catalysed reaction is D-glyceraldehyde 3-phosphate + phosphate + NADP(+) = (2R)-3-phospho-glyceroyl phosphate + NADPH + H(+). It participates in carbohydrate biosynthesis; Calvin cycle. The protein is Glyceraldehyde-3-phosphate dehydrogenase A, chloroplastic (GAPA) of Pisum sativum (Garden pea).